A 263-amino-acid chain; its full sequence is MSDTEEVEHGEEEYEEEAHEAEEVHEEEVHEPAPPPEEAPEEEEKPRIKLTAPKIPEGEKVDFDDIQKKRQNKDLIELQALIDSHFEARRKEEEELVALKERIEKRRAERAEQQRIRAEKEKERQARLAEEKARREEEDAKRKAEDDLKKKKALSSMGASYSSYLAKADQKRGKKQTARETKKKVLAERRKPLNIDHLNEDKLRDKAKELWDWLYQLQTEKYDFAEQIKRKKYEIVTLRNRIDQAQKHSKKAGAKGKVGGRWK.

Positions 1–26 (MSDTEEVEHGEEEYEEEAHEAEEVHE) are enriched in acidic residues. 3 disordered regions span residues 1 to 66 (MSDT…FDDI), 107 to 188 (RAER…VLAE), and 243 to 263 (DQAQ…GRWK). S2 carries the post-translational modification N-acetylserine. Basic and acidic residues-rich tracts occupy residues 56–66 (PEGEKVDFDDI), 107–149 (RAER…DDLK), and 177–188 (TARETKKKVLAE). The segment covering 247-263 (KHSKKAGAKGKVGGRWK) has biased composition (basic residues).

Belongs to the troponin T family.

In terms of biological role, troponin T is the tropomyosin-binding subunit of troponin, the thin filament regulatory complex which confers calcium-sensitivity to striated muscle actomyosin ATPase activity. This chain is Troponin T, fast skeletal muscle isoforms (TNNT3), found in Gallus gallus (Chicken).